Reading from the N-terminus, the 88-residue chain is Large ribosomal subunit protein bL27 (88 aa).

Low complexity predominate over residues 1–13 (MATKKSGGSSSNG). Residues 1-24 (MATKKSGGSSSNGRDSRGRRLGVK) form a disordered region.

This sequence belongs to the bacterial ribosomal protein bL27 family.

The polypeptide is Large ribosomal subunit protein bL27 (Ehrlichia ruminantium (strain Gardel)).